The following is a 278-amino-acid chain: tRNA (guanine-N(7)-)-methyltransferase (278 aa).

S-adenosyl-L-methionine is bound by residues G95, E118–I119, N153–A154, and C173. Residue D176 is part of the active site. T251 to E253 contacts S-adenosyl-L-methionine.

This sequence belongs to the class I-like SAM-binding methyltransferase superfamily. TrmB family. In terms of assembly, forms a complex with TRM82.

The protein resides in the nucleus. It carries out the reaction guanosine(46) in tRNA + S-adenosyl-L-methionine = N(7)-methylguanosine(46) in tRNA + S-adenosyl-L-homocysteine. It functions in the pathway tRNA modification; N(7)-methylguanine-tRNA biosynthesis. In terms of biological role, catalyzes the formation of N(7)-methylguanine at position 46 (m7G46) in tRNA. In Kluyveromyces lactis (strain ATCC 8585 / CBS 2359 / DSM 70799 / NBRC 1267 / NRRL Y-1140 / WM37) (Yeast), this protein is tRNA (guanine-N(7)-)-methyltransferase.